Consider the following 280-residue polypeptide: Beta carbonic anhydrase 4 (280 aa).

Residue alanine 2 is modified to N-acetylalanine. Residues 47-76 (NVAAAKIKALTAELKELDSSNSDAIERIKT) are a coiled coil. Threonine 57 bears the Phosphothreonine mark. The residue at position 117 (serine 117) is a Phosphoserine. Position 223 is an S-nitrosocysteine (cysteine 223).

Belongs to the beta-class carbonic anhydrase family. Interacts with DTX56. In terms of tissue distribution, strongly expressed in aerial tissues including leaves, stems, flowers and siliques. Accumulates in both guard cells and mesophyll cells.

It is found in the cell membrane. It carries out the reaction hydrogencarbonate + H(+) = CO2 + H2O. Functionally, reversible hydration of carbon dioxide. Together with BCA1, involved in the CO(2) signaling pathway which controls gas-exchange between plants and the atmosphere by modulating stomatal development and movements. Promotes water use efficiency. In Arabidopsis thaliana (Mouse-ear cress), this protein is Beta carbonic anhydrase 4.